Here is a 184-residue protein sequence, read N- to C-terminus: Ribosome-recycling factor (184 aa).

This sequence belongs to the RRF family.

It localises to the cytoplasm. Its function is as follows. Responsible for the release of ribosomes from messenger RNA at the termination of protein biosynthesis. May increase the efficiency of translation by recycling ribosomes from one round of translation to another. The sequence is that of Ribosome-recycling factor from Aster yellows witches'-broom phytoplasma (strain AYWB).